Reading from the N-terminus, the 352-residue chain is Glucose-6-phosphatase catalytic subunit 1 (352 aa).

At methionine 1–aspartate 27 the chain is on the lumenal side. A helical transmembrane segment spans residues leucine 28 to histidine 48. Residues leucine 49–arginine 56 are Cytoplasmic-facing. The chain crosses the membrane as a helical span at residues leucine 57–glycine 77. The Lumenal portion of the chain corresponds to glutamate 78–serine 113. Arginine 79 contributes to the substrate binding site. Residues glycine 114–alanine 134 traverse the membrane as a helical segment. The Proton donor role is filled by histidine 115. The Cytoplasmic portion of the chain corresponds to arginine 135–proline 141. Residues leucine 142–valine 162 form a helical membrane-spanning segment. Residues cysteine 163–arginine 166 are Lumenal-facing. A substrate-binding site is contributed by arginine 166. Residues valine 167–valine 187 traverse the membrane as a helical segment. Residue histidine 172 is the Nucleophile of the active site. Over alanine 188–tyrosine 205 the chain is Cytoplasmic. Residues phenylalanine 206 to leucine 226 form a helical membrane-spanning segment. At aspartate 227–serine 256 the chain is on the lumenal side. Residues leucine 257–tyrosine 276 form a helical membrane-spanning segment. Topologically, residues lysine 277–arginine 289 are cytoplasmic. A helical transmembrane segment spans residues isoleucine 290–proline 310. The Lumenal portion of the chain corresponds to glutamate 311–serine 324. Residues alanine 325 to valine 345 form a helical membrane-spanning segment. Residues lysine 346–leucine 352 lie on the Cytoplasmic side of the membrane. The short motif at glycine 349–leucine 352 is the Prevents secretion from ER element.

This sequence belongs to the glucose-6-phosphatase family.

Its subcellular location is the endoplasmic reticulum membrane. It catalyses the reaction D-glucose 6-phosphate + H2O = D-glucose + phosphate. It functions in the pathway carbohydrate biosynthesis; gluconeogenesis. Functionally, hydrolyzes glucose-6-phosphate to glucose in the endoplasmic reticulum. Forms with the glucose-6-phosphate transporter (SLC37A4/G6PT) the complex responsible for glucose production in the terminal step of glycogenolysis and gluconeogenesis. Hence, it is the key enzyme in homeostatic regulation of blood glucose levels. This Haplochromis nubilus (Blue Victoria mouthbrooder) protein is Glucose-6-phosphatase catalytic subunit 1 (g6pc1).